We begin with the raw amino-acid sequence, 179 residues long: Large ribosomal subunit protein uL6 (179 aa).

Belongs to the universal ribosomal protein uL6 family. Part of the 50S ribosomal subunit.

This protein binds to the 23S rRNA, and is important in its secondary structure. It is located near the subunit interface in the base of the L7/L12 stalk, and near the tRNA binding site of the peptidyltransferase center. This chain is Large ribosomal subunit protein uL6, found in Rhodococcus jostii (strain RHA1).